The following is a 505-amino-acid chain: MEEIQGYLQLDRSQQHGFLYPLIFQEYIYALAHDHSLNRSILLENPVYDNKSSFLIVKRLITRIYQQNHFIIFANNSNQNLFFGHNKNLYSQTISEGLAFIVEIPFYIRLISSQGGKGILKFRNLRSIHSPFPFLENNFSHLNSVLDILIPHPVHLEILVQNLRYWVKDASSLHLLRFFFHEYWNWNTLIDRKKPSFDFSPKRNQKLFFLLYNSHVCEYESIFFFLRKQSSHLRSTSFGVFLERIYFYEKKERLVEVFAKDFQASLWLFKDPFIHYVRYQGKSILVSNGTPLLMNKWKSYLVNFWQCHFGIWFHPGRVYINQLPNYSFNFMGYLSSVRLNHSMVRSQMLENAFLINNAIKKFDTLVPLIPLIGSLAKAKFCNLLGHPISKPIWTDLADSDIIDRFWHICRNLSHYYSGSSKKKSLYRIKYILRLSCAKTLARKHKSTVRAFLKGLGSEFLEKFLTSEEEALSLTFSRTSSTFRGVYRNRIWYLDIIYINDLTNYQ.

Belongs to the intron maturase 2 family. MatK subfamily.

The protein resides in the plastid. Its subcellular location is the chloroplast. Its function is as follows. Usually encoded in the trnK tRNA gene intron. Probably assists in splicing its own and other chloroplast group II introns. This chain is Maturase K, found in Coffea arabica (Arabian coffee).